The chain runs to 516 residues: Extracellular endo-inulinase inu2 (516 aa).

A signal peptide spans M1–A23. Substrate is bound by residues M41–E43 and N61. The active site involves E43. N-linked (GlcNAc...) asparagine glycans are attached at residues N108 and N109. D176 is a substrate binding site. A glycan (N-linked (GlcNAc...) asparagine) is linked at N210. Substrate is bound at residue N320. The N-linked (GlcNAc...) asparagine glycan is linked to N372.

The protein belongs to the glycosyl hydrolase 32 family.

Its subcellular location is the secreted. It carries out the reaction Endohydrolysis of (2-&gt;1)-beta-D-fructosidic linkages in inulin.. Its function is as follows. Endo-inulinase involved in utilization of the plant storage polymer inulin, consisting of fructooligosaccharides with a degree of polymerization (DP) value from 2 to 60. The protein is Extracellular endo-inulinase inu2 (inu2) of Aspergillus ficuum.